Consider the following 339-residue polypeptide: DNA-directed RNA polymerase subunit alpha (339 aa).

The alpha N-terminal domain (alpha-NTD) stretch occupies residues 1–233 (MVREEVAGST…DLFLPFLHAE (233 aa)). The segment at 264–339 (KKGIPLNCIF…IDLLKNKLSF (76 aa)) is alpha C-terminal domain (alpha-CTD).

Belongs to the RNA polymerase alpha chain family. In plastids the minimal PEP RNA polymerase catalytic core is composed of four subunits: alpha, beta, beta', and beta''. When a (nuclear-encoded) sigma factor is associated with the core the holoenzyme is formed, which can initiate transcription.

The protein resides in the plastid. It localises to the chloroplast. It catalyses the reaction RNA(n) + a ribonucleoside 5'-triphosphate = RNA(n+1) + diphosphate. Functionally, DNA-dependent RNA polymerase catalyzes the transcription of DNA into RNA using the four ribonucleoside triphosphates as substrates. In Festucopsis festucoides, this protein is DNA-directed RNA polymerase subunit alpha.